The primary structure comprises 89 residues: Small ribosomal subunit protein uS15 (89 aa).

Belongs to the universal ribosomal protein uS15 family. As to quaternary structure, part of the 30S ribosomal subunit. Forms a bridge to the 50S subunit in the 70S ribosome, contacting the 23S rRNA.

Its function is as follows. One of the primary rRNA binding proteins, it binds directly to 16S rRNA where it helps nucleate assembly of the platform of the 30S subunit by binding and bridging several RNA helices of the 16S rRNA. In terms of biological role, forms an intersubunit bridge (bridge B4) with the 23S rRNA of the 50S subunit in the ribosome. This chain is Small ribosomal subunit protein uS15, found in Bacteroides fragilis (strain ATCC 25285 / DSM 2151 / CCUG 4856 / JCM 11019 / LMG 10263 / NCTC 9343 / Onslow / VPI 2553 / EN-2).